The primary structure comprises 186 residues: MDTFSTKSLALQAQKKLLSKMASRAVASAFIDDTSSEVLDELYRATKEFTRSRKEAQKLVKNLVKVAVKLGVLLRAGQLGAEELARLQRLRQQARRLAMTAVSFHQVDFTFDRRVLATTLLECRDLLHQAAGAHLTAKSHGRINHVFGHLADCDFLAALYSPAEPYRSHLRRICDGLTRMLDEDSI.

Belongs to the TNFAIP8 family. In terms of assembly, interacts with FBXW5; TNFAIP8L1 competes with TSC2 to bind FBXW5 increasing TSC2 stability by preventing its ubiquitination.

It localises to the cytoplasm. Acts as a negative regulator of mTOR activity. The polypeptide is Tumor necrosis factor alpha-induced protein 8-like protein 1 (TNFAIP8L1) (Bos taurus (Bovine)).